Reading from the N-terminus, the 564-residue chain is Apyrase (564 aa).

Positions 1 to 25 are cleaved as a signal peptide; it reads MAGKPGIQLFVIFLLLSSFAAVVWA. The a divalent metal cation site is built by D48, H50, D99, N131, H234, and H258. Residue R371 participates in AMP binding. A glycan (N-linked (GlcNAc...) asparagine) is linked at N391. R406, F425, and D515 together coordinate AMP.

This sequence belongs to the 5'-nucleotidase family. The cofactor is a divalent metal cation. In terms of tissue distribution, female salivary gland (at protein level). Low-level expression in male tissues. Not detected in female carcasses without salivary glands.

The protein resides in the secreted. The enzyme catalyses a ribonucleoside 5'-triphosphate + 2 H2O = a ribonucleoside 5'-phosphate + 2 phosphate + 2 H(+). Functionally, facilitates hematophagy by inhibiting ADP-dependent platelet aggregation in the host. Cleaves adenosine triphosphate (ATP) and adenosine diphosphate (ADP) to adenosine monophosphate (AMP) and inorganic phosphate. May reduce probing time by facilitating the speed of locating blood. In Aedes albopictus (Asian tiger mosquito), this protein is Apyrase.